A 181-amino-acid polypeptide reads, in one-letter code: Probable pyruvoyl-dependent arginine decarboxylase (181 aa).

Serine 43 carries the post-translational modification Pyruvic acid (Ser).

Belongs to the PdaD family. Requires pyruvate as cofactor.

It carries out the reaction L-arginine + H(+) = agmatine + CO2. The chain is Probable pyruvoyl-dependent arginine decarboxylase from Chlorobaculum parvum (strain DSM 263 / NCIMB 8327) (Chlorobium vibrioforme subsp. thiosulfatophilum).